The sequence spans 80 residues: Exodeoxyribonuclease 7 small subunit (80 aa).

The protein belongs to the XseB family. In terms of assembly, heterooligomer composed of large and small subunits.

Its subcellular location is the cytoplasm. It catalyses the reaction Exonucleolytic cleavage in either 5'- to 3'- or 3'- to 5'-direction to yield nucleoside 5'-phosphates.. In terms of biological role, bidirectionally degrades single-stranded DNA into large acid-insoluble oligonucleotides, which are then degraded further into small acid-soluble oligonucleotides. The protein is Exodeoxyribonuclease 7 small subunit of Vibrio vulnificus (strain CMCP6).